Reading from the N-terminus, the 190-residue chain is Elongation factor P (190 aa).

This sequence belongs to the elongation factor P family.

It is found in the cytoplasm. The protein operates within protein biosynthesis; polypeptide chain elongation. Its function is as follows. Involved in peptide bond synthesis. Stimulates efficient translation and peptide-bond synthesis on native or reconstituted 70S ribosomes in vitro. Probably functions indirectly by altering the affinity of the ribosome for aminoacyl-tRNA, thus increasing their reactivity as acceptors for peptidyl transferase. This Bartonella bacilliformis (strain ATCC 35685 / KC583 / Herrer 020/F12,63) protein is Elongation factor P.